A 205-amino-acid polypeptide reads, in one-letter code: MAASTASHRPIKGILKNKTSSTSSRVASAEQPRGSVDEELSKKSQKWDEMNILATYHPADKDYGLMKIDEPSTPYHSMIGDDDDAYSDTETTEAMTPDTLAKKLAAAEGSEPKYRIREQESSGEEDSDLSPEEREKKRQFEMKRKLHYNEGLNIKLARQLISKDLHDDEEDEEMSETADGESMNTEESNQGSTPSDQRQNKSQSS.

Disordered regions lie at residues 1–46 and 64–205; these read MAAS…KSQK and GLMK…SQSS. Alanine 2 is subject to N-acetylalanine. Required for binding PPP1CC stretches follow at residues 12–17 and 43–55; these read KGILKN and KSQKWDEMNILAT. The segment covering 17–26 has biased composition (polar residues); sequence NKTSSTSSRV. Over residues 35–46 the composition is skewed to basic and acidic residues; the sequence is SVDEELSKKSQK. At serine 44 the chain carries Phosphoserine; by ATM. Threonine 73 is subject to Phosphothreonine; by GSK3. A compositionally biased stretch (acidic residues) spans 80 to 91; it reads GDDDDAYSDTET. The residue at position 87 (serine 87) is a Phosphoserine. Phosphothreonine is present on residues threonine 89, threonine 92, and threonine 96. Over residues 110-120 the composition is skewed to basic and acidic residues; it reads SEPKYRIREQE. Phosphoserine is present on residues serine 121, serine 122, serine 127, and serine 130. The span at 121–130 shows a compositional bias: acidic residues; sequence SSGEEDSDLS. Positions 131–143 are enriched in basic and acidic residues; it reads PEEREKKRQFEMK. The tract at residues 147–150 is required for binding PPP1CC catalytic center, displacing metal ions and inhibition of PPP1CC catalytic activity; sequence HYNE. Residues 167-179 are compositionally biased toward acidic residues; the sequence is DDEEDEEMSETAD. The span at 182–205 shows a compositional bias: polar residues; the sequence is SMNTEESNQGSTPSDQRQNKSQSS.

This sequence belongs to the protein phosphatase inhibitor 2 family. Heterodimer with PP1. Post-translationally, phosphorylation on Ser-44 by ATM activates PP1 by dissociating the PP1-PPP1R2 complex. Phosphorylation on Thr-73 by GSK3 activates PP1 by dissociating the PP1-PPP1R2 complex.

Its function is as follows. Inhibitor of protein-phosphatase 1. The chain is Protein phosphatase inhibitor 2 (PPP1R2) from Oryctolagus cuniculus (Rabbit).